We begin with the raw amino-acid sequence, 188 residues long: Succinate-acetate/proton symporter SatP (188 aa).

The Cytoplasmic portion of the chain corresponds to 1–13; it reads MGNTKLANPAPLG. Residues 14–34 form a helical membrane-spanning segment; it reads LMGFGMTTILLNLHNVGYFAL. Position 35 (D35) is a topological domain, periplasmic. Residues 36–56 form a helical membrane-spanning segment; the sequence is GIILAMGIFYGGIAQIFAGLL. Residues 57 to 63 lie on the Cytoplasmic side of the membrane; the sequence is EYKKGNT. Residues 64 to 84 form a helical membrane-spanning segment; the sequence is FGLTAFTSYGSFWLTLVAILL. The Periplasmic segment spans residues 85-97; that stretch reads MPKLGLTDAPNAQ. A helical transmembrane segment spans residues 98–118; that stretch reads FLGVYLGLWGVFTLFMFFGTL. Residues 119-122 are Cytoplasmic-facing; sequence KGAR. The helical transmembrane segment at 123 to 143 threads the bilayer; the sequence is VLQFVFFSLTVLFALLAIGNI. Residues 144–148 are Periplasmic-facing; it reads AGNAA. The helical transmembrane segment at 149 to 169 threads the bilayer; it reads IIHFAGWIGLICGASAIYLAM. Residues 170–188 are Cytoplasmic-facing; that stretch reads GEVLNEQFGRTVLPIGESH.

Belongs to the acetate uptake transporter (AceTr) (TC 2.A.96) family.

Its subcellular location is the cell inner membrane. Its function is as follows. Uptake of acetate and succinate. Transport is energetically dependent on the protonmotive force. This chain is Succinate-acetate/proton symporter SatP (satP), found in Escherichia coli O157:H7.